An 802-amino-acid polypeptide reads, in one-letter code: Copper-exporting P-type ATPase (802 aa).

HMA domains lie at 5 to 70 (KKTT…YGVA) and 72 to 138 (ETVE…YDAS). Cu(+)-binding residues include C16, C19, C83, and C86. The next 6 membrane-spanning stretches (helical) occupy residues 161 to 181 (LIIS…HLFN), 192 to 212 (WFQF…FYVG), 224 to 244 (MDVL…YEMV), 256 to 276 (LYFE…YLEA), 411 to 431 (YFVP…ITLV), and 438 to 458 (PALV…LGLA). D495 serves as the catalytic 4-aspartylphosphate intermediate. Residues D690 and D694 each contribute to the Mg(2+) site. A run of 2 helical transmembrane segments spans residues 748 to 767 (LFWA…LGLL) and 771 to 790 (VAGA…ALRL).

The protein belongs to the cation transport ATPase (P-type) (TC 3.A.3) family. Type IB subfamily.

It is found in the cell membrane. It carries out the reaction Cu(+)(in) + ATP + H2O = Cu(+)(out) + ADP + phosphate + H(+). Its function is as follows. Involved in copper export. The chain is Copper-exporting P-type ATPase (copA) from Staphylococcus aureus (strain MRSA252).